The chain runs to 167 residues: Aphrodisin (167 aa).

A signal peptide spans 1–16; sequence MVKILLLALVFSLAHA. At glutamine 17 the chain carries Pyrrolidone carboxylic acid. 2 disulfide bridges follow: cysteine 54/cysteine 58 and cysteine 73/cysteine 165. N-linked (GlcNAc...) asparagine glycans are attached at residues asparagine 57 and asparagine 85.

It belongs to the calycin superfamily. Lipocalin family. Expressed in the vagina, uterus, and Bartholin's glands of female hamsters. Secreted in vaginal discharge.

The protein localises to the secreted. Functionally, acts as an aphrodisiac pheromone, reliably eliciting copulatory behavior from male hamster. The protein is Aphrodisin of Cricetus cricetus (Black-bellied hamster).